Consider the following 246-residue polypeptide: Probable transcriptional regulatory protein CTC_02215 (246 aa).

It belongs to the TACO1 family.

It is found in the cytoplasm. This is Probable transcriptional regulatory protein CTC_02215 from Clostridium tetani (strain Massachusetts / E88).